The chain runs to 466 residues: Asparagine--tRNA ligase (466 aa).

It belongs to the class-II aminoacyl-tRNA synthetase family. Homodimer.

It is found in the cytoplasm. The enzyme catalyses tRNA(Asn) + L-asparagine + ATP = L-asparaginyl-tRNA(Asn) + AMP + diphosphate + H(+). The sequence is that of Asparagine--tRNA ligase from Salmonella choleraesuis (strain SC-B67).